A 655-amino-acid polypeptide reads, in one-letter code: Probable alpha-galactosidase D (655 aa).

The signal sequence occupies residues 1-16 (MASVIALSLLLPAAFA). Residues N87 and N93 are each glycosylated (N-linked (GlcNAc...) asparagine). A disulfide bridge links C126 with C153. D151 (nucleophile) is an active-site residue. 196–200 (EWGID) provides a ligand contact to substrate. The Proton donor role is filled by D218. N432, N482, N502, N540, and N579 each carry an N-linked (GlcNAc...) asparagine glycan.

This sequence belongs to the glycosyl hydrolase 27 family.

The protein resides in the secreted. It catalyses the reaction Hydrolysis of terminal, non-reducing alpha-D-galactose residues in alpha-D-galactosides, including galactose oligosaccharides, galactomannans and galactolipids.. Its function is as follows. Hydrolyzes a variety of simple alpha-D-galactoside as well as more complex molecules such as oligosaccharides and polysaccharides. This chain is Probable alpha-galactosidase D (aglD), found in Aspergillus terreus (strain NIH 2624 / FGSC A1156).